Here is a 284-residue protein sequence, read N- to C-terminus: Para-Rep C3 (284 aa).

The region spanning 3–98 (TVQSTCWVFT…IEGPWEYGKY (96 aa)) is the CRESS-DNA virus Rep endonuclease domain. The RCR-1 signature appears at 10-13 (VFTL). A divalent metal cation-binding residues include Glu36 and His42. The short motif at 42-44 (HLQ) is the RCR-2 element. Residues 51–71 (AQQSLGQMKAIIPGAHFEKMR) carry the Nuclear localization signal motif. The active-site For DNA cleavage activity is Tyr81. The RCR-3 motif lies at 81 to 84 (YAMK). Asp86 is a binding site for a divalent metal cation. The short motif at 98–104 (YIKKGSH) is the Nuclear localization signal element. An ATP-binding site is contributed by 174-182 (GPKGGEGKS).

Belongs to the nanoviridea/circoviridae replication-associated protein family. In terms of assembly, homooligomer (Potential). Rep binds to repeated DNA motifs (iterons). Requires Mg(2+) as cofactor. Mn(2+) serves as cofactor.

It is found in the host nucleus. It catalyses the reaction ATP + H2O = ADP + phosphate + H(+). Initiates and terminates the replication only of its own subviral DNA molecule. The closed circular ssDNA genome is first converted to a superhelical dsDNA. Rep binds a specific hairpin at the genome origin of replication. Introduces an endonucleolytic nick within the intergenic region of the genome, thereby initiating the rolling circle replication (RCR). Following cleavage, binds covalently to the 5'-phosphate of DNA as a tyrosyl ester. The cleavage gives rise to a free 3'-OH that serves as a primer for the cellular DNA polymerase. The polymerase synthesizes the (+) strand DNA by rolling circle mechanism. After one round of replication, a Rep-catalyzed nucleotidyl transfer reaction releases a circular single-stranded virus genome, thereby terminating the replication. Displays origin-specific DNA cleavage, nucleotidyl transferase, ATPase and helicase activities. In Milk vetch dwarf C3 alphasatellite (MVDC3A), this protein is Para-Rep C3 (C3).